The following is a 384-amino-acid chain: Protein RecA (384 aa).

76–83 (GPESSGKT) contacts ATP. The interval 346-365 (QGSAEPEKAAKPEKVEKADK) is disordered. Over residues 350-365 (EPEKAAKPEKVEKADK) the composition is skewed to basic and acidic residues.

This sequence belongs to the RecA family.

The protein resides in the cytoplasm. Its function is as follows. Can catalyze the hydrolysis of ATP in the presence of single-stranded DNA, the ATP-dependent uptake of single-stranded DNA by duplex DNA, and the ATP-dependent hybridization of homologous single-stranded DNAs. It interacts with LexA causing its activation and leading to its autocatalytic cleavage. This Polaromonas naphthalenivorans (strain CJ2) protein is Protein RecA.